Consider the following 86-residue polypeptide: High affinity immunoglobulin epsilon receptor subunit gamma (86 aa).

Positions Met-1–Ala-18 are cleaved as a signal peptide. Residues Leu-19–Gln-23 lie on the Extracellular side of the membrane. The helical transmembrane segment at Leu-24–Cys-44 threads the bilayer. Residues Arg-45–Gln-86 lie on the Cytoplasmic side of the membrane. The ITAM domain maps to Asp-54–Glu-82. Phosphotyrosine occurs at positions 65 and 76. Thr-78 carries the post-translational modification Phosphothreonine.

This sequence belongs to the CD3Z/FCER1G family. As to quaternary structure, igE Fc receptor is a tetramer of an alpha chain, a beta chain, and two disulfide linked gamma chains. Associates with FCGR1A to form a functional receptor complex. The signaling subunit of immunoglobulin gamma (IgG) Fc receptor complex. As a homodimer or a heterodimer of CD247 and FCER1G, associates with the ligand binding subunit FCGR3A to form a functional receptor complex. Associates with CLEC6A. Interacts with CLEC4E. Interacts (via ITAM domain) with SYK (via SH2 domains); activates SYK, enabling integrin-mediated activation of neutrophils and macrophages. Interacts with common beta chain of interleukin 3 receptor CSF2RB and recruits SYK in response to IL3 stimulation; this interaction is direct. Interacts with CD300LH; the interaction may be indirect. Interacts with CD300LD. Interacts with TARM1. In terms of tissue distribution, expressed in leukocytes and pinealocytes. Expression in the pineal gland does not undergo circadian variations.

The protein localises to the cell membrane. Its function is as follows. Adapter protein containing an immunoreceptor tyrosine-based activation motif (ITAM) that transduces activation signals from various immunoreceptors. As a component of the high-affinity immunoglobulin E (IgE) receptor, mediates allergic inflammatory signaling in mast cells. As a constitutive component of interleukin-3 receptor complex, selectively mediates interleukin 4/IL4 production by basophils priming T-cells toward effector T-helper 2 subset. Associates with pattern recognition receptors CLEC4D and CLEC4E to form a functional signaling complex in myeloid cells. Binding of mycobacterial trehalose 6,6'-dimycolate (TDM) to this receptor complex leads to phosphorylation of ITAM, triggering activation of SYK, CARD9 and NF-kappa-B, consequently driving maturation of antigen-presenting cells and shaping antigen-specific priming of T-cells toward effector T-helper 1 and T-helper 17 cell subtypes. May function cooperatively with other activating receptors. Functionally linked to integrin beta-2/ITGB2-mediated neutrophil activation. Also involved in integrin alpha-2/ITGA2-mediated platelet activation. This chain is High affinity immunoglobulin epsilon receptor subunit gamma (Fcer1g), found in Rattus norvegicus (Rat).